A 507-amino-acid polypeptide reads, in one-letter code: ATP synthase subunit alpha, chloroplastic (507 aa).

169-176 serves as a coordination point for ATP; it reads IGDRQTGK.

The protein belongs to the ATPase alpha/beta chains family. As to quaternary structure, F-type ATPases have 2 components, CF(1) - the catalytic core - and CF(0) - the membrane proton channel. CF(1) has five subunits: alpha(3), beta(3), gamma(1), delta(1), epsilon(1). CF(0) has four main subunits: a, b, b' and c.

The protein localises to the plastid. It localises to the chloroplast thylakoid membrane. It catalyses the reaction ATP + H2O + 4 H(+)(in) = ADP + phosphate + 5 H(+)(out). Functionally, produces ATP from ADP in the presence of a proton gradient across the membrane. The alpha chain is a regulatory subunit. This is ATP synthase subunit alpha, chloroplastic from Saccharum hybrid (Sugarcane).